The primary structure comprises 308 residues: MIIVTGGFGMIGSNIVKALNEIGRKDILVVDNLKNGEKFVNLVDLDIADYCDKEDFIASIIAGDDFGEIDAVFHEGACSATTEWDGKYLMHNNYEYSKELLHFCLDHQIPFFYASSAATYGGRSDNFIEERKFEQPLNAYGYSKFLFDEYVRQVLPEADSPVCGFKYFNVYGPREQHKGSMASVAFHLNNQMLKGENPKLFEGSETFLRDFVYVEDVAKVNIWAWQNSISGIYNLGTGKAESFQAVAQAVIDFHGKGEIEKIPFPDHLKSRYQTFTQADLTKLRAAGYTGTFKTVAEGTKEYMAWLNR.

Residues 10–11 (MI), 31–32 (DN), Lys-38, Lys-53, 75–79 (EGACS), and Asn-92 contribute to the NADP(+) site. Tyr-140 (proton acceptor) is an active-site residue. Lys-144 serves as a coordination point for NADP(+). Residue Asn-169 participates in substrate binding. Val-170 and Lys-178 together coordinate NADP(+). Lys-178 acts as the Proton acceptor in catalysis. Substrate-binding positions include Ser-180, His-187, 201-204 (FEGS), Arg-209, and Tyr-272.

It belongs to the NAD(P)-dependent epimerase/dehydratase family. HldD subfamily. In terms of assembly, homopentamer. It depends on NADP(+) as a cofactor.

It carries out the reaction ADP-D-glycero-beta-D-manno-heptose = ADP-L-glycero-beta-D-manno-heptose. The protein operates within nucleotide-sugar biosynthesis; ADP-L-glycero-beta-D-manno-heptose biosynthesis; ADP-L-glycero-beta-D-manno-heptose from D-glycero-beta-D-manno-heptose 7-phosphate: step 4/4. In terms of biological role, catalyzes the interconversion between ADP-D-glycero-beta-D-manno-heptose and ADP-L-glycero-beta-D-manno-heptose via an epimerization at carbon 6 of the heptose. This is ADP-L-glycero-D-manno-heptose-6-epimerase from Actinobacillus pleuropneumoniae serotype 7 (strain AP76).